A 315-amino-acid polypeptide reads, in one-letter code: Serine/threonine-protein phosphatase PP2A catalytic subunit 2 (315 aa).

The Mn(2+) site is built by Asp62, His64, Asp90, and Asn122. Catalysis depends on His123, which acts as the Proton donor. The Mn(2+) site is built by His172 and His247. The segment at 294–315 (QFEPAPRENEPHTTRRVPDYFL) is disordered. The span at 298 to 315 (APRENEPHTTRRVPDYFL) shows a compositional bias: basic and acidic residues. Residue Leu315 is modified to Leucine methyl ester.

It belongs to the PPP phosphatase family. PP-2A subfamily. Mn(2+) serves as cofactor. Reversibly methyl esterified on Leu-315 by leucine carboxyl methyltransferase 1 (PPM1) and protein phosphatase methylesterase 1 (PPE1). Carboxyl methylation influences the affinity of the catalytic subunit for the different regulatory subunits, thereby modulating the PP2A holoenzyme's substrate specificity, enzyme activity and cellular localization.

The catalysed reaction is O-phospho-L-seryl-[protein] + H2O = L-seryl-[protein] + phosphate. The enzyme catalyses O-phospho-L-threonyl-[protein] + H2O = L-threonyl-[protein] + phosphate. The polypeptide is Serine/threonine-protein phosphatase PP2A catalytic subunit 2 (Ppn2) (Paramecium tetraurelia).